The primary structure comprises 212 residues: Cyclin-dependent kinase 2-interacting protein (212 aa).

Residue Met-1 is modified to N-acetylmethionine. Ser-69 and Ser-73 each carry phosphoserine. Residues 73–107 (SKENEEKVCLEYNEELEKLCEELQATLDGLTKIQV) are a coiled coil. Ser-202 contacts Na(+).

Belongs to the CINP family. As to quaternary structure, homodimer. Part of the 55LCC heterohexameric ATPase complex composed at least of AIRIM, AFG2A, AFG2B and CINP. Interacts with AIRIM. Interacts with CDK2 and CDC7. Interacts with the components of the replication complex, MCM2, MCM3, MCM4, MCM5, MCM6, MCM7 and with ORC2-containing complexes. Interacts with ATRIP. Interacts with CEP152. Associates with pre-60S ribosomal particles. In terms of processing, phosphorylated by CDC7 but not by CDK2.

The protein localises to the nucleus. In terms of biological role, component of the DNA replication complex, which interacts with two kinases, CDK2 and CDC7, thereby providing a functional and physical link between CDK2 and CDC7 during firing of the origins of replication. Regulates ATR-mediated checkpoint signaling in response to DNA damage. Part of the 55LCC heterohexameric ATPase complex which is chromatin-associated and promotes replisome proteostasis to maintain replication fork progression and genome stability. Required for replication fork progression, sister chromatid cohesion, and chromosome stability. The ATPase activity is specifically enhanced by replication fork DNA and is coupled to cysteine protease-dependent cleavage of replisome substrates in response to replication fork damage. Uses ATPase activity to process replisome substrates in S-phase, facilitating their proteolytic turnover from chromatin to ensure DNA replication and mitotic fidelity. As part of 55LCC complex, also involved in the cytoplasmic maturation steps of pre-60S ribosomal particles by promoting the release of shuttling protein RSL24D1/RLP24 from the pre-ribosomal particles. The polypeptide is Cyclin-dependent kinase 2-interacting protein (Homo sapiens (Human)).